Here is a 233-residue protein sequence, read N- to C-terminus: Phosphatidylserine decarboxylase proenzyme (233 aa).

Ser190 acts as the Schiff-base intermediate with substrate; via pyruvic acid in catalysis. At Ser190 the chain carries Pyruvic acid (Ser); by autocatalysis.

Belongs to the phosphatidylserine decarboxylase family. PSD-A subfamily. As to quaternary structure, heterodimer of a large membrane-associated beta subunit and a small pyruvoyl-containing alpha subunit. Requires pyruvate as cofactor. Is synthesized initially as an inactive proenzyme. Formation of the active enzyme involves a self-maturation process in which the active site pyruvoyl group is generated from an internal serine residue via an autocatalytic post-translational modification. Two non-identical subunits are generated from the proenzyme in this reaction, and the pyruvate is formed at the N-terminus of the alpha chain, which is derived from the carboxyl end of the proenzyme. The post-translation cleavage follows an unusual pathway, termed non-hydrolytic serinolysis, in which the side chain hydroxyl group of the serine supplies its oxygen atom to form the C-terminus of the beta chain, while the remainder of the serine residue undergoes an oxidative deamination to produce ammonia and the pyruvoyl prosthetic group on the alpha chain.

The protein localises to the cell membrane. The catalysed reaction is a 1,2-diacyl-sn-glycero-3-phospho-L-serine + H(+) = a 1,2-diacyl-sn-glycero-3-phosphoethanolamine + CO2. It participates in phospholipid metabolism; phosphatidylethanolamine biosynthesis; phosphatidylethanolamine from CDP-diacylglycerol: step 2/2. Its function is as follows. Catalyzes the formation of phosphatidylethanolamine (PtdEtn) from phosphatidylserine (PtdSer). The polypeptide is Phosphatidylserine decarboxylase proenzyme (Azorhizobium caulinodans (strain ATCC 43989 / DSM 5975 / JCM 20966 / LMG 6465 / NBRC 14845 / NCIMB 13405 / ORS 571)).